Here is a 470-residue protein sequence, read N- to C-terminus: Cysteine--tRNA ligase (470 aa).

Cys-27 contributes to the Zn(2+) binding site. The short motif at 29–39 (PTVYNFFHIGN) is the 'HIGH' region element. 3 residues coordinate Zn(2+): Cys-211, His-236, and Glu-240. A 'KMSKS' region motif is present at residues 268 to 272 (KMSKS). An ATP-binding site is contributed by Lys-271.

This sequence belongs to the class-I aminoacyl-tRNA synthetase family. Monomer. Zn(2+) serves as cofactor.

Its subcellular location is the cytoplasm. It carries out the reaction tRNA(Cys) + L-cysteine + ATP = L-cysteinyl-tRNA(Cys) + AMP + diphosphate. The chain is Cysteine--tRNA ligase from Clostridium botulinum (strain Eklund 17B / Type B).